We begin with the raw amino-acid sequence, 452 residues long: Isocitrate dehydrogenase [NADP], mitochondrial (452 aa).

Residues Met1–Tyr39 constitute a mitochondrion transit peptide. An N6-acetyllysine mark is found at Lys45, Lys48, Lys67, and Lys69. Lys80 and Lys106 each carry N6-acetyllysine; alternate. An N6-succinyllysine; alternate mark is found at Lys80 and Lys106. Residues Thr115–Thr117 and Arg122 each bind NADP(+). A D-threo-isocitrate-binding site is contributed by Thr117. D-threo-isocitrate-binding positions include Ser134 to Arg140 and Arg149. The residue at position 155 (Lys155) is an N6-acetyllysine. Lys166 is modified (N6-acetyllysine; alternate). Position 166 is an N6-succinyllysine; alternate (Lys166). D-threo-isocitrate is bound at residue Arg172. N6-acetyllysine; alternate occurs at positions 180 and 193. N6-succinyllysine; alternate occurs at positions 180 and 193. Residue Lys199 is modified to N6-acetyllysine. N6-acetyllysine; alternate is present on Lys256. Lys256 is modified (N6-succinyllysine; alternate). N6-acetyllysine occurs at positions 263, 272, 275, and 280. The residue at position 282 (Lys282) is an N6-acetyllysine; alternate. Lys282 is subject to N6-succinyllysine; alternate. Asp291 provides a ligand contact to Mn(2+). Lys299 contributes to the NADP(+) binding site. Position 314 (Asp314) interacts with Mn(2+). Residues Gly349 to His354 and Asn367 contribute to the NADP(+) site. N6-acetyllysine; alternate is present on Lys384. Lys384 bears the N6-succinyllysine; alternate mark. An N6-acetyllysine mark is found at Lys400, Lys413, and Lys442.

Belongs to the isocitrate and isopropylmalate dehydrogenases family. In terms of assembly, homodimer. Mg(2+) serves as cofactor. Mn(2+) is required as a cofactor. In terms of processing, acetylation at Lys-413 dramatically reduces catalytic activity. Deacetylated by SIRT3.

The protein resides in the mitochondrion. It catalyses the reaction D-threo-isocitrate + NADP(+) = 2-oxoglutarate + CO2 + NADPH. Plays a role in intermediary metabolism and energy production. It may tightly associate or interact with the pyruvate dehydrogenase complex. The polypeptide is Isocitrate dehydrogenase [NADP], mitochondrial (IDH2) (Homo sapiens (Human)).